We begin with the raw amino-acid sequence, 592 residues long: Aspartate--tRNA ligase (592 aa).

E171 contacts L-aspartate. Residues 195–198 (QLFK) form an aspartate region. R217 contacts L-aspartate. ATP contacts are provided by residues 217 to 219 (RDE) and Q226. H448 is an L-aspartate binding site. E482 lines the ATP pocket. An L-aspartate-binding site is contributed by R489. 534–537 (GLDR) is a binding site for ATP.

This sequence belongs to the class-II aminoacyl-tRNA synthetase family. Type 1 subfamily. As to quaternary structure, homodimer.

The protein resides in the cytoplasm. It catalyses the reaction tRNA(Asp) + L-aspartate + ATP = L-aspartyl-tRNA(Asp) + AMP + diphosphate. Catalyzes the attachment of L-aspartate to tRNA(Asp) in a two-step reaction: L-aspartate is first activated by ATP to form Asp-AMP and then transferred to the acceptor end of tRNA(Asp). The chain is Aspartate--tRNA ligase from Vibrio vulnificus (strain YJ016).